The sequence spans 158 residues: MLRIGQGFDVHQLTEGRPLIIGGVTIPYEKGLLGHSDADVLLHTVADACLGAIAEGDIGRHFPDTDPEFKDADSFQLLQHVWALVKEKGYTLVNIDCTIMAQKPKMAPYIQPMCEKIAEALEADVTQVNVKATTTEKLGFTGRGEGIASQATVLLQKK.

Residues Asp9 and His11 each contribute to the a divalent metal cation site. 4-CDP-2-C-methyl-D-erythritol 2-phosphate-binding positions include 9–11 (DVH) and 35–36 (HS). Position 43 (His43) interacts with a divalent metal cation. 4-CDP-2-C-methyl-D-erythritol 2-phosphate is bound by residues 57 to 59 (DIG), 62 to 66 (FPDTD), 101 to 107 (AQKPKMA), 133 to 136 (TTTE), Phe140, and Arg143.

Belongs to the IspF family. Homotrimer. Requires a divalent metal cation as cofactor.

The enzyme catalyses 4-CDP-2-C-methyl-D-erythritol 2-phosphate = 2-C-methyl-D-erythritol 2,4-cyclic diphosphate + CMP. It functions in the pathway isoprenoid biosynthesis; isopentenyl diphosphate biosynthesis via DXP pathway; isopentenyl diphosphate from 1-deoxy-D-xylulose 5-phosphate: step 4/6. Its function is as follows. Involved in the biosynthesis of isopentenyl diphosphate (IPP) and dimethylallyl diphosphate (DMAPP), two major building blocks of isoprenoid compounds. Catalyzes the conversion of 4-diphosphocytidyl-2-C-methyl-D-erythritol 2-phosphate (CDP-ME2P) to 2-C-methyl-D-erythritol 2,4-cyclodiphosphate (ME-CPP) with a corresponding release of cytidine 5-monophosphate (CMP). This is 2-C-methyl-D-erythritol 2,4-cyclodiphosphate synthase from Bacillus pumilus (strain SAFR-032).